The chain runs to 455 residues: Aminopeptidase YwaD (455 aa).

The N-terminal stretch at 1–31 (MKKLLTVMTMAVLTAGTLLLPAQSVTPAAHA) is a signal peptide. 5 residues coordinate Zn(2+): H250, D262, E295, D323, and H401.

This sequence belongs to the peptidase M28 family. M28B subfamily. As to quaternary structure, monomer. Zn(2+) is required as a cofactor.

It is found in the secreted. The enzyme catalyses Release of N-terminal Arg and Lys from oligopeptides when P1' is not Pro. Also acts on arylamides of Arg and Lys.. The catalysed reaction is Release of an N-terminal amino acid, preferentially leucine, but not glutamic or aspartic acids.. Its function is as follows. Catalyzes the hydrolysis of a range of N-terminal amino acids. This is Aminopeptidase YwaD (ywaD) from Bacillus subtilis (strain 168).